An 80-amino-acid chain; its full sequence is uncharacterized protein (80 aa).

In terms of biological role, essential for virus function. This is an uncharacterized protein from Sulfolobus spindle-shape virus 1 (SSV1).